A 96-amino-acid chain; its full sequence is Teretoxin Tgu6.1 (96 aa).

A signal peptide spans 1–16 (MRPFLVFVLIVSVSLA). The propeptide occupies 17–52 (FSFEDMPNKGGDSVASITADQARGHKRNPLFPFAQR).

In terms of processing, contains 3 disulfide bonds. Expressed by the venom duct.

Its subcellular location is the secreted. Functionally, the recombinant protein causes paralysis to polychaete worms (Nereis virens), the natural prey of terebrid snails. The polypeptide is Teretoxin Tgu6.1 (Terebra guttata (White spotted auger snail)).